The following is a 345-amino-acid chain: Fructose-1,6-bisphosphatase class 1 (345 aa).

Mg(2+) contacts are provided by Glu90, Asp109, Leu111, and Asp112. Residues 112 to 115 (DGSS) and Asn199 contribute to the substrate site. Glu271 is a Mg(2+) binding site.

Belongs to the FBPase class 1 family. Homotetramer. Requires Mg(2+) as cofactor.

Its subcellular location is the cytoplasm. The catalysed reaction is beta-D-fructose 1,6-bisphosphate + H2O = beta-D-fructose 6-phosphate + phosphate. It functions in the pathway carbohydrate biosynthesis; Calvin cycle. The protein is Fructose-1,6-bisphosphatase class 1 of Rhodopseudomonas palustris (strain BisB5).